A 109-amino-acid polypeptide reads, in one-letter code: Urease subunit gamma (109 aa).

It belongs to the urease gamma subunit family. Heterotrimer of UreA (gamma), UreB (beta) and UreC (alpha) subunits. Three heterotrimers associate to form the active enzyme.

Its subcellular location is the cytoplasm. The enzyme catalyses urea + 2 H2O + H(+) = hydrogencarbonate + 2 NH4(+). It functions in the pathway nitrogen metabolism; urea degradation; CO(2) and NH(3) from urea (urease route): step 1/1. This is Urease subunit gamma from Natronomonas pharaonis (strain ATCC 35678 / DSM 2160 / CIP 103997 / JCM 8858 / NBRC 14720 / NCIMB 2260 / Gabara) (Halobacterium pharaonis).